The following is a 278-amino-acid chain: Purine nucleoside phosphorylase YlmD (278 aa).

3 residues coordinate Zn(2+): histidine 87, cysteine 132, and histidine 149.

This sequence belongs to the purine nucleoside phosphorylase YfiH/LACC1 family. As to quaternary structure, homodimer. Requires Cu(2+) as cofactor. Zn(2+) is required as a cofactor.

The enzyme catalyses adenosine + phosphate = alpha-D-ribose 1-phosphate + adenine. The catalysed reaction is S-methyl-5'-thioadenosine + phosphate = 5-(methylsulfanyl)-alpha-D-ribose 1-phosphate + adenine. It catalyses the reaction inosine + phosphate = alpha-D-ribose 1-phosphate + hypoxanthine. It carries out the reaction adenosine + H2O + H(+) = inosine + NH4(+). In terms of biological role, purine nucleoside enzyme that catalyzes the phosphorolysis of adenosine and inosine nucleosides, yielding D-ribose 1-phosphate and the respective free bases, adenine and hypoxanthine. Also catalyzes the phosphorolysis of S-methyl-5'-thioadenosine into adenine and S-methyl-5-thio-alpha-D-ribose 1-phosphate. Also has adenosine deaminase activity. The protein is Purine nucleoside phosphorylase YlmD (ylmD) of Bacillus subtilis (strain 168).